Reading from the N-terminus, the 129-residue chain is Small ribosomal subunit protein uS11 (129 aa).

The disordered stretch occupies residues 108–129; it reads EDVTPIPHDGTKPKGGKRGRRV.

The protein belongs to the universal ribosomal protein uS11 family. Part of the 30S ribosomal subunit.

In terms of biological role, located on the platform of the 30S subunit. This is Small ribosomal subunit protein uS11 from Methanothrix thermoacetophila (strain DSM 6194 / JCM 14653 / NBRC 101360 / PT) (Methanosaeta thermophila).